We begin with the raw amino-acid sequence, 511 residues long: Histidine ammonia-lyase (511 aa).

The 5-imidazolinone (Ala-Gly) cross-link spans 142–144; that stretch reads ASG. 2,3-didehydroalanine (Ser) is present on Ser143.

Belongs to the PAL/histidase family. Contains an active site 4-methylidene-imidazol-5-one (MIO), which is formed autocatalytically by cyclization and dehydration of residues Ala-Ser-Gly.

It is found in the cytoplasm. The enzyme catalyses L-histidine = trans-urocanate + NH4(+). It participates in amino-acid degradation; L-histidine degradation into L-glutamate; N-formimidoyl-L-glutamate from L-histidine: step 1/3. The polypeptide is Histidine ammonia-lyase (Chelativorans sp. (strain BNC1)).